A 195-amino-acid polypeptide reads, in one-letter code: Probable GTP-binding protein EngB (195 aa).

An EngB-type G domain is found at 22–194 (LKGEVAFVGR…LDLISTLLKE (173 aa)). GTP is bound by residues 30-37 (GRSNVGKS), 56-60 (GKTRS), 74-77 (DLPG), 141-144 (TKMD), and 173-175 (TSS). Residues S37 and T58 each contribute to the Mg(2+) site.

This sequence belongs to the TRAFAC class TrmE-Era-EngA-EngB-Septin-like GTPase superfamily. EngB GTPase family. It depends on Mg(2+) as a cofactor.

Its function is as follows. Necessary for normal cell division and for the maintenance of normal septation. The chain is Probable GTP-binding protein EngB from Thermotoga sp. (strain RQ2).